The chain runs to 63 residues: Toxin S6C6 (63 aa).

Disulfide bonds link C3–C24, C6–C11, C17–C39, C43–C55, and C56–C61.

It belongs to the three-finger toxin family. Ancestral subfamily. Orphan group XIX sub-subfamily. Expressed by the venom gland.

Its subcellular location is the secreted. May enhance presynaptic acetylcholine release. This is Toxin S6C6 from Dendroaspis jamesoni kaimosae (Eastern Jameson's mamba).